The sequence spans 279 residues: Probable endonuclease 4 (279 aa).

Zn(2+) contacts are provided by His68, His108, Glu143, Asp177, His180, His214, Asp227, His229, and Glu259.

This sequence belongs to the AP endonuclease 2 family. Requires Zn(2+) as cofactor.

It catalyses the reaction Endonucleolytic cleavage to 5'-phosphooligonucleotide end-products.. In terms of biological role, endonuclease IV plays a role in DNA repair. It cleaves phosphodiester bonds at apurinic or apyrimidinic (AP) sites, generating a 3'-hydroxyl group and a 5'-terminal sugar phosphate. This chain is Probable endonuclease 4, found in Nitrosopumilus maritimus (strain SCM1).